The following is a 93-amino-acid chain: SH3 domain-binding glutamic acid-rich-like protein 3 (93 aa).

N-acetylserine is present on Ser2. The region spanning 2–93 (SGLRVYSTSV…NTLQEFLKLA (92 aa)) is the Glutaredoxin domain. Thr9 is a glycosylation site (O-linked (GalNAc...) threonine).

Belongs to the SH3BGR family. As to quaternary structure, interacts with MYO1C (via its IQ motifs); the interaction is dependent on calcium and takes place at membrane ruffles. In terms of processing, may be glycosylated. As to expression, expressed in heart, liver, lung, kidney, spleen, thymus, ovarian follicles, skeletal muscle, brain, lymph node and mammary epithelial and stromal cells (at protein level).

The protein localises to the cytoplasm. It localises to the cytosol. Its subcellular location is the cell projection. The protein resides in the ruffle membrane. It is found in the nucleus. In terms of biological role, could act as a modulator of glutaredoxin biological activity. May play a role in cytoskeleton organization. The polypeptide is SH3 domain-binding glutamic acid-rich-like protein 3 (Rattus norvegicus (Rat)).